A 316-amino-acid chain; its full sequence is Apolipoprotein E (316 aa).

The signal sequence occupies residues 1 to 18 (MKALWAVLVVTLLAGCLA). Repeat copies occupy residues 76–97 (VLME…EQMG), 98–119 (PMAE…SRLG), 120–141 (ADME…TMLG), 142–163 (QSTE…KRLM), 164–185 (RDAE…EGAE), 186–207 (RGVG…QRTA), 208–229 (NLGA…ARIR), and 230–251 (GRLE…EQME). Positions 76-251 (VLMEDTMTEL…RLEEVREQME (176 aa)) are 8 X 22 AA approximate tandem repeats. The residue at position 139 (Met139) is a Methionine sulfoxide. Ser143 carries the phosphoserine modification. An LDL and other lipoprotein receptors binding region spans residues 154-164 (HLRKLRKRLMR). 158–161 (LRKR) contributes to the heparin binding site. The tract at residues 206–286 (TANLGAGAAQ…GWFEPLVEDM (81 aa)) is lipid-binding and lipoprotein association. Residue 225-232 (GARIRGRL) participates in heparin binding. The segment at 262–316 (QQMRLQAEIFQTRLKGWFEPLVEDMQRQWANLMEKIQASVATNPIPPSSVPQESQ) is homooligomerization. Residues 274–286 (RLKGWFEPLVEDM) are specificity for association with VLDL.

The protein belongs to the apolipoprotein A1/A4/E family. In terms of assembly, homotetramer. May interact with ABCA1; functionally associated with ABCA1 in the biogenesis of HDLs. May interact with APP/A4 amyloid-beta peptide; the interaction is extremely stable in vitro but its physiological significance is unclear. May interact with MAPT. May interact with MAP2. In the cerebrospinal fluid, interacts with secreted SORL1. Interacts with PMEL; this allows the loading of PMEL luminal fragment on ILVs to induce fibril nucleation. APOE exists as multiple glycosylated and sialylated glycoforms within cells and in plasma. The extent of glycosylation and sialylation are tissue and context specific. Post-translationally, glycated in plasma VLDL. In terms of processing, phosphorylated by FAM20C in the extracellular medium.

The protein resides in the secreted. Its subcellular location is the extracellular space. It localises to the extracellular matrix. It is found in the extracellular vesicle. The protein localises to the endosome. The protein resides in the multivesicular body. APOE is an apolipoprotein, a protein associating with lipid particles, that mainly functions in lipoprotein-mediated lipid transport between organs via the plasma and interstitial fluids. APOE is a core component of plasma lipoproteins and is involved in their production, conversion and clearance. Apolipoproteins are amphipathic molecules that interact both with lipids of the lipoprotein particle core and the aqueous environment of the plasma. As such, APOE associates with chylomicrons, chylomicron remnants, very low density lipoproteins (VLDL) and intermediate density lipoproteins (IDL) but shows a preferential binding to high-density lipoproteins (HDL). It also binds a wide range of cellular receptors including the LDL receptor/LDLR, the LDL receptor-related proteins LRP1, LRP2 and LRP8 and the very low-density lipoprotein receptor/VLDLR that mediate the cellular uptake of the APOE-containing lipoprotein particles. Finally, APOE also has a heparin-binding activity and binds heparan-sulfate proteoglycans on the surface of cells, a property that supports the capture and the receptor-mediated uptake of APOE-containing lipoproteins by cells. A main function of APOE is to mediate lipoprotein clearance through the uptake of chylomicrons, VLDLs, and HDLs by hepatocytes. APOE is also involved in the biosynthesis by the liver of VLDLs as well as their uptake by peripheral tissues ensuring the delivery of triglycerides and energy storage in muscle, heart and adipose tissues. By participating in the lipoprotein-mediated distribution of lipids among tissues, APOE plays a critical role in plasma and tissues lipid homeostasis. APOE is also involved in two steps of reverse cholesterol transport, the HDLs-mediated transport of cholesterol from peripheral tissues to the liver, and thereby plays an important role in cholesterol homeostasis. First, it is functionally associated with ABCA1 in the biogenesis of HDLs in tissues. Second, it is enriched in circulating HDLs and mediates their uptake by hepatocytes. APOE also plays an important role in lipid transport in the central nervous system, regulating neuron survival and sprouting. The chain is Apolipoprotein E (APOE) from Microtus ochrogaster (Prairie vole).